The primary structure comprises 859 residues: Anoctamin-7 (859 aa).

Residues methionine 1 to glycine 297 are Cytoplasmic-facing. A disordered region spans residues glycine 25–serine 50. The chain crosses the membrane as a helical span at residues tryptophan 298–phenylalanine 318. Over serine 319–histidine 362 the chain is Extracellular. Residues glycine 363 to tryptophan 383 form a helical membrane-spanning segment. Topologically, residues lysine 384–alanine 441 are cytoplasmic. Residues glycine 442–leucine 462 traverse the membrane as a helical segment. The Extracellular portion of the chain corresponds to tyrosine 463 to serine 492. Residues valine 493 to leucine 513 traverse the membrane as a helical segment. Over threonine 514–threonine 530 the chain is Cytoplasmic. A helical transmembrane segment spans residues leucine 531–phenylalanine 551. At lysine 552–glutamine 651 the chain is on the extracellular side. The helical transmembrane segment at phenylalanine 652–asparagine 672 threads the bilayer. Residues asparagine 673–glycine 700 lie on the Cytoplasmic side of the membrane. A helical transmembrane segment spans residues isoleucine 701–leucine 721. Over alanine 722–tyrosine 780 the chain is Extracellular. 2 N-linked (GlcNAc...) asparagine glycosylation sites follow: asparagine 746 and asparagine 761. Residues tryptophan 781–isoleucine 801 traverse the membrane as a helical segment. Residues glycine 802 to alanine 859 lie on the Cytoplasmic side of the membrane.

This sequence belongs to the anoctamin family. Highly expressed in the stomach. Expressed at low levels in small intestine and large intestine.

It localises to the cell membrane. The protein resides in the endoplasmic reticulum. It carries out the reaction a 1,2-diacyl-sn-glycero-3-phospho-L-serine(in) = a 1,2-diacyl-sn-glycero-3-phospho-L-serine(out). It catalyses the reaction a beta-D-galactosyl-(1&lt;-&gt;1')-N-acylsphing-4-enine(out) = a beta-D-galactosyl-(1&lt;-&gt;1')-N-acylsphing-4-enine(in). The catalysed reaction is a 1,2-diacyl-sn-glycero-3-phosphocholine(in) = a 1,2-diacyl-sn-glycero-3-phosphocholine(out). Has calcium-dependent phospholipid scramblase activity; scrambles phosphatidylserine, phosphatidylcholine and galactosylceramide. Does not exhibit calcium-activated chloride channel (CaCC) activity. May play a role in cell-cell interactions. In Mus musculus (Mouse), this protein is Anoctamin-7 (Ano7).